The primary structure comprises 253 residues: Fatty acid elongase 5 (253 aa).

The next 7 helical transmembrane spans lie at 24-44 (IFVS…LVII), 60-80 (IMMI…ISLA), 100-120 (FWIF…VLMI), 127-147 (QLSF…GLLL), 150-170 (GIGN…HFLM), 188-208 (ILTK…SLAP), and 214-234 (FALQ…ILFL). Positions 132-136 (HIYHH) match the HxxHH motif motif. H135 acts as the Nucleophile in catalysis.

Belongs to the ELO family.

It is found in the membrane. The enzyme catalyses an acyl-CoA + malonyl-CoA + H(+) = a 3-oxoacyl-CoA + CO2 + CoA. Its pathway is lipid metabolism; polyunsaturated fatty acid biosynthesis. Functionally, involved in the synthesis of fatty acids. Elongates C20 polyunsaturated fatty acids (PUFAs) with a preference for n-6 PUFAs. The chain is Fatty acid elongase 5 from Trypanosoma cruzi (strain CL Brener).